A 113-amino-acid polypeptide reads, in one-letter code: Nucleoid-associated protein SYNW0027 (113 aa).

Belongs to the YbaB/EbfC family. Homodimer.

It localises to the cytoplasm. The protein resides in the nucleoid. In terms of biological role, binds to DNA and alters its conformation. May be involved in regulation of gene expression, nucleoid organization and DNA protection. The polypeptide is Nucleoid-associated protein SYNW0027 (Parasynechococcus marenigrum (strain WH8102)).